The primary structure comprises 149 residues: Large ribosomal subunit protein eL24A (149 aa).

2 stretches are compositionally biased toward basic and acidic residues: residues 93–102 (KRNQRPEVRA) and 116–125 (KAASESEKKA). A disordered region spans residues 93–149 (KRNQRPEVRAAARAAALKQRKDKKAASESEKKAIKAKSAASSARGQAIKNAKAAARH).

This sequence belongs to the eukaryotic ribosomal protein eL24 family. As to quaternary structure, component of the large ribosomal subunit (LSU). Mature yeast ribosomes consist of a small (40S) and a large (60S) subunit. The 40S small subunit contains 1 molecule of ribosomal RNA (18S rRNA) and at least 33 different proteins. The large 60S subunit contains 3 rRNA molecules (25S, 5.8S and 5S rRNA) and at least 46 different proteins.

The protein resides in the cytoplasm. Component of the ribosome, a large ribonucleoprotein complex responsible for the synthesis of proteins in the cell. The small ribosomal subunit (SSU) binds messenger RNAs (mRNAs) and translates the encoded message by selecting cognate aminoacyl-transfer RNA (tRNA) molecules. The large subunit (LSU) contains the ribosomal catalytic site termed the peptidyl transferase center (PTC), which catalyzes the formation of peptide bonds, thereby polymerizing the amino acids delivered by tRNAs into a polypeptide chain. The nascent polypeptides leave the ribosome through a tunnel in the LSU and interact with protein factors that function in enzymatic processing, targeting, and the membrane insertion of nascent chains at the exit of the ribosomal tunnel. The sequence is that of Large ribosomal subunit protein eL24A (rpl2401) from Schizosaccharomyces pombe (strain 972 / ATCC 24843) (Fission yeast).